We begin with the raw amino-acid sequence, 228 residues long: 5'-methylthioadenosine/S-adenosylhomocysteine nucleosidase (228 aa).

The Proton acceptor role is filled by Glu-11. Residues Gly-77, Ile-151, and 172–173 (ME) each bind substrate. The Proton donor role is filled by Asp-196.

Belongs to the PNP/UDP phosphorylase family. MtnN subfamily.

The enzyme catalyses S-adenosyl-L-homocysteine + H2O = S-(5-deoxy-D-ribos-5-yl)-L-homocysteine + adenine. The catalysed reaction is S-methyl-5'-thioadenosine + H2O = 5-(methylsulfanyl)-D-ribose + adenine. It carries out the reaction 5'-deoxyadenosine + H2O = 5-deoxy-D-ribose + adenine. It functions in the pathway amino-acid biosynthesis; L-methionine biosynthesis via salvage pathway; S-methyl-5-thio-alpha-D-ribose 1-phosphate from S-methyl-5'-thioadenosine (hydrolase route): step 1/2. In terms of biological role, catalyzes the irreversible cleavage of the glycosidic bond in both 5'-methylthioadenosine (MTA) and S-adenosylhomocysteine (SAH/AdoHcy) to adenine and the corresponding thioribose, 5'-methylthioribose and S-ribosylhomocysteine, respectively. Also cleaves 5'-deoxyadenosine, a toxic by-product of radical S-adenosylmethionine (SAM) enzymes, into 5-deoxyribose and adenine. The sequence is that of 5'-methylthioadenosine/S-adenosylhomocysteine nucleosidase from Staphylococcus epidermidis (strain ATCC 12228 / FDA PCI 1200).